The following is a 758-amino-acid chain: ATP-dependent RNA helicase dbp7 (758 aa).

Disordered stretches follow at residues 28-98 (TWRD…NQPR) and 110-130 (EPQKAEEVKEEGHVENAKPTN). Residues 35–45 (AKKIAKHHAKG) are compositionally biased toward basic residues. Residues 84–98 (GKQQSHGHPHSNQPR) are compositionally biased toward polar residues. Residues 110–125 (EPQKAEEVKEEGHVEN) show a composition bias toward basic and acidic residues. Positions 138–167 (DTFTNLGLSPNLAAHLLTKLELKAPTAIQK) match the Q motif motif. The Helicase ATP-binding domain maps to 171–372 (SQLLKEEGDA…EISLKDAVHI (202 aa)). Position 184 to 191 (184 to 191 (AETGSGKT)) interacts with ATP. Positions 308-311 (DEGD) match the DEAD box motif. The region spanning 398 to 620 (QLKQSYAVVA…NVESGNKDWE (223 aa)) is the Helicase C-terminal domain. Basic and acidic residues-rich tracts occupy residues 455–471 (KEDGGEPSDTDKSEEKP) and 697–709 (GKEETKKDFKAER). Disordered stretches follow at residues 455–483 (KEDGGEPSDTDKSEEKPPSSPHGTIAPAT) and 697–745 (GKEE…RAKM).

This sequence belongs to the DEAD box helicase family. DDX31/DBP7 subfamily.

The protein localises to the nucleus. Its subcellular location is the nucleolus. It catalyses the reaction ATP + H2O = ADP + phosphate + H(+). Its function is as follows. ATP-binding RNA helicase involved in the biogenesis of 60S ribosomal subunits and is required for the normal formation of 25S and 5.8S rRNAs. This Aspergillus fumigatus (strain ATCC MYA-4609 / CBS 101355 / FGSC A1100 / Af293) (Neosartorya fumigata) protein is ATP-dependent RNA helicase dbp7 (dbp7).